We begin with the raw amino-acid sequence, 540 residues long: Calnexin homolog (540 aa).

A signal peptide spans 1–29; the sequence is MELSRRKMCCYIQFCCFVLIGCFISQICA. The Lumenal portion of the chain corresponds to 30-469; the sequence is SSDAIFYESF…EKAETQPNIT (440 aa). Positions 38 and 69 each coordinate Ca(2+). Cysteines 112 and 147 form a disulfide. Tyr-116, Lys-118, Tyr-138, and Asp-145 together coordinate an alpha-D-glucoside. The disordered stretch occupies residues 221–301; it reads LIPTKTIPDP…DWDDEEDGEW (81 aa). Residues 227-360 are p domain (Extended arm); that stretch reads IPDPDDKKPE…REIPNPDYFE (134 aa). Residues 228 to 253 are compositionally biased toward basic and acidic residues; it reads PDPDDKKPEDWDERAKIPDPEATKPD. Tandem repeats lie at residues 229–240, 246–257, 265–276, 284–295, and 299–309. 2 4 X approximate repeats regions span residues 229-295 and 299-356; these read DPDD…DWDD and GEWE…IPNP. Composition is skewed to acidic residues over residues 254-285 and 292-301; these read DWDE…IDDP and DWDDEEDGEW. Cys-311 and Cys-317 form a disulfide bridge. 3 tandem repeats follow at residues 318–328, 332–342, and 346–356. Glu-375 lines the an alpha-D-glucoside pocket. Asp-386 lines the Ca(2+) pocket. Asn-467 carries an N-linked (GlcNAc...) asparagine glycan. The chain crosses the membrane as a helical span at residues 470-490; sequence IGVIVSIIVVIFSILLKLLFG. Residues 491–540 are Cytoplasmic-facing; it reads GKKAAPKVNVVPKKKEEPEASNTAEVREGEEEKTEGEVAAAPRRRPRRDT. The disordered stretch occupies residues 499 to 540; the sequence is NVVPKKKEEPEASNTAEVREGEEEKTEGEVAAAPRRRPRRDT.

Belongs to the calreticulin family.

It is found in the endoplasmic reticulum membrane. Calcium-binding protein that interacts with newly synthesized monoglucosylated glycoproteins in the endoplasmic reticulum. It may act in assisting protein assembly and/or in the retention within the ER of unassembled protein subunits. It seems to play a major role in the quality control apparatus of the ER by the retention of incorrectly folded proteins. The polypeptide is Calnexin homolog (Helianthus tuberosus (Jerusalem artichoke)).